Here is a 201-residue protein sequence, read N- to C-terminus: Auxin-binding protein 1 (201 aa).

The first 38 residues, 1–38, serve as a signal peptide directing secretion; that stretch reads MAPDLSELAAAAAARGAYLAGVGVAVLLAASFLPVAES. A disulfide bridge connects residues cysteine 40 and cysteine 193. Zn(2+) is bound by residues histidine 95, histidine 97, and glutamate 101. Residue asparagine 133 is glycosylated (N-linked (GlcNAc...) asparagine). Histidine 144 is a Zn(2+) binding site. A Prevents secretion from ER motif is present at residues 198–201; sequence KDEL.

As to quaternary structure, homodimer. Glycosylated. Expressed in roots, coleoptiles, leaves, stems, tassels and ears.

The protein resides in the endoplasmic reticulum lumen. In terms of biological role, receptor for the plant hormone auxin. The protein is Auxin-binding protein 1 of Zea mays (Maize).